A 321-amino-acid polypeptide reads, in one-letter code: MKFVATLIACGLSGLALAAPTATVDSLGKRAADDAAFGYASLNGGTTGGAGGTTTTVSSYAAFTAAVSSDAKKVVYVSGPIKQSAKQVKVGSNTSIIGKDSTAVLEGFGLLVKEKSNVIIRNLGVKKVLAENGDAIGIQYSNNVWVDHVDVSSDRDHDKDYYDGLIDVTHAADYVTISNSYIHDHWKASLVGHSDNNGDEDKGHLRVTYANNYWSNINSRAPSLRFGTGHIYNSYFENVSDGINTRDGAQVLVESNQFVGSSKALYSTDDGYAVERDNDFGGAKNTALQGTLTTVPYSYSLLGSSKVKSAVVGVAGQTLKF.

Residues 1–18 (MKFVATLIACGLSGLALA) form the signal peptide. Residue asparagine 93 is glycosylated (N-linked (GlcNAc...) asparagine). Positions 134, 163, and 167 each coordinate Ca(2+). Arginine 220 is an active-site residue. An N-linked (GlcNAc...) asparagine glycan is attached at asparagine 238.

Belongs to the polysaccharide lyase 1 family. Ca(2+) is required as a cofactor.

The protein localises to the secreted. It catalyses the reaction Eliminative cleavage of (1-&gt;4)-alpha-D-galacturonan to give oligosaccharides with 4-deoxy-alpha-D-galact-4-enuronosyl groups at their non-reducing ends.. Its function is as follows. Pectinolytic enzyme consist of four classes of enzymes: pectin lyase, polygalacturonase, pectin methylesterase and rhamnogalacturonase. Among pectinolytic enzymes, pectin lyase is the most important in depolymerization of pectin, since it cleaves internal glycosidic bonds of highly methylated pectins. Favors pectate, the anion, over pectin, the methyl ester. This chain is Probable pectate lyase A (plyA), found in Aspergillus fumigatus (strain CBS 144.89 / FGSC A1163 / CEA10) (Neosartorya fumigata).